The sequence spans 152 residues: UPF0266 membrane protein YobD (152 aa).

Helical transmembrane passes span 6-26 (LVLI…QFIM), 45-65 (IDSV…VTNH), and 67-87 (ALIT…IFWI).

It belongs to the UPF0266 family.

The protein localises to the cell inner membrane. The sequence is that of UPF0266 membrane protein YobD from Shigella dysenteriae serotype 1 (strain Sd197).